The chain runs to 103 residues: Large ribosomal subunit protein uL24 (103 aa).

Belongs to the universal ribosomal protein uL24 family. As to quaternary structure, part of the 50S ribosomal subunit.

In terms of biological role, one of two assembly initiator proteins, it binds directly to the 5'-end of the 23S rRNA, where it nucleates assembly of the 50S subunit. Its function is as follows. One of the proteins that surrounds the polypeptide exit tunnel on the outside of the subunit. This Bacillus mycoides (strain KBAB4) (Bacillus weihenstephanensis) protein is Large ribosomal subunit protein uL24.